We begin with the raw amino-acid sequence, 666 residues long: Kinesin-like protein Nod (666 aa).

The 313-residue stretch at 8 to 320 (AVRIAVREAP…LRFGTSAKKL (313 aa)) folds into the Kinesin motor domain. 87-94 (GQTGTGKS) serves as a coordination point for ATP. The segment at 423–450 (GFHSDSDKDRHLMPPPTGQEPRQASSQN) is disordered. Residues 639–666 (ENLFQVKSLPIWSGNKWERFCQINCLDT) adopt a coiled-coil conformation.

Belongs to the TRAFAC class myosin-kinesin ATPase superfamily. Kinesin family. In terms of tissue distribution, in adult female, found in meiotically active ovaries.

The protein resides in the cytoplasm. Its subcellular location is the cytoskeleton. Its function is as follows. Required for the distributive chromosome segregation of non-exchange chromosomes during meiosis. May be a microtubule motor required to hold distributively 'paired' chromosomes at the metaphase plate until anaphase. The polypeptide is Kinesin-like protein Nod (nod) (Drosophila melanogaster (Fruit fly)).